Here is a 373-residue protein sequence, read N- to C-terminus: D-alanine--D-alanine ligase (373 aa).

The ATP-grasp domain maps to 156–363 (KKLWSAAGLP…YPTLLATMVE (208 aa)). Position 184 to 239 (184 to 239 (LQRLGLPAYVKPARGGSSIGVSRVSSFDELPAAIAAARRHDPKVIVEAAINGRELE)) interacts with ATP. Positions 318, 330, and 332 each coordinate Mg(2+).

The protein belongs to the D-alanine--D-alanine ligase family. It depends on Mg(2+) as a cofactor. Requires Mn(2+) as cofactor.

It localises to the cytoplasm. The catalysed reaction is 2 D-alanine + ATP = D-alanyl-D-alanine + ADP + phosphate + H(+). It functions in the pathway cell wall biogenesis; peptidoglycan biosynthesis. Its function is as follows. Cell wall formation. The sequence is that of D-alanine--D-alanine ligase from Mycobacterium ulcerans (strain Agy99).